The primary structure comprises 478 residues: Probable cytosol aminopeptidase (478 aa).

Positions 244 and 249 each coordinate Mn(2+). Residue Lys256 is part of the active site. The Mn(2+) site is built by Asp267, Asp326, and Glu328. The active site involves Arg330.

Belongs to the peptidase M17 family. Requires Mn(2+) as cofactor.

Its subcellular location is the cytoplasm. It catalyses the reaction Release of an N-terminal amino acid, Xaa-|-Yaa-, in which Xaa is preferably Leu, but may be other amino acids including Pro although not Arg or Lys, and Yaa may be Pro. Amino acid amides and methyl esters are also readily hydrolyzed, but rates on arylamides are exceedingly low.. It carries out the reaction Release of an N-terminal amino acid, preferentially leucine, but not glutamic or aspartic acids.. Its function is as follows. Presumably involved in the processing and regular turnover of intracellular proteins. Catalyzes the removal of unsubstituted N-terminal amino acids from various peptides. The chain is Probable cytosol aminopeptidase from Fusobacterium nucleatum subsp. nucleatum (strain ATCC 25586 / DSM 15643 / BCRC 10681 / CIP 101130 / JCM 8532 / KCTC 2640 / LMG 13131 / VPI 4355).